The following is a 598-amino-acid chain: Probable translation initiation factor IF-2 (598 aa).

A tr-type G domain is found at 3–225 (LRCPIVSVLG…GLAQKFLEQK (223 aa)). Residues 12 to 19 (GHVDHGKT) are G1. A GTP-binding site is contributed by 12–19 (GHVDHGKT). A G2 region spans residues 37–41 (GITQH). The G3 stretch occupies residues 76 to 79 (DTPG). GTP-binding positions include 76-80 (DTPGH) and 130-133 (NKVD). The G4 stretch occupies residues 130–133 (NKVD). Residues 200–202 (SAM) form a G5 region.

Belongs to the TRAFAC class translation factor GTPase superfamily. Classic translation factor GTPase family. IF-2 subfamily.

Functionally, function in general translation initiation by promoting the binding of the formylmethionine-tRNA to ribosomes. Seems to function along with eIF-2. In Methanococcus maripaludis (strain C7 / ATCC BAA-1331), this protein is Probable translation initiation factor IF-2.